Here is a 453-residue protein sequence, read N- to C-terminus: MANVVLDGSAAPAKAGLPLDLSSPSKQTNFPTELESNSNADFWWRLCRPEMAGLFKQAGGYTELQQESHLRFVREHCAPWMGTVPTGHMANEAVAPVEMSVNYISSRDEGVLRFQMEPFTAVSGPHTQADDPSGKKAVCSMLRSFQHALGDVDLTWTWQLVDKFMVTAPDEVARLREAERTSLPPPLDLYQRTPQFNFAFDLSPDKKSMKTYFLPLAKSLVTGSSALDYCLDAVRSLEPHGEGLSPVADLLHQFFNTSCPGHMSCDYLGIDSTNPKRSRVKLYVSSQQHNSFNFIRAVFTLGGIAKDEATLRGLEFLRSIWHLLVNVDEGELPDSSDRPAKQLPFFLGCLYFSFEWRAGDRLPLVKLYVPQWQYAQSDRKIAKNISASLRKLGRDEAADEYLTHIKQTFPRADLDGNVSIHNQVSYAYSAETGAYLTIYYSVNSKAVARDQIY.

An L-tryptophan-binding site is contributed by 95–96; sequence AP. Positions 210, 212, 279, 281, 283, 368, and 435 each coordinate substrate.

Belongs to the tryptophan dimethylallyltransferase family.

The protein operates within mycotoxin biosynthesis. O-glucose prenyltransferase; part of the 2 gene clusters that mediate the biosynthesis of fusicoccins, diterpene glucosides that display phytohormone-like activity and function as potent activators of plasma membrane H(+)-ATPases in plants by modifying 14-3-3 proteins and cause the plant disease constriction canker. The first step in the pathway is performed by the fusicoccadiene synthase PaFS that possesses both prenyl transferase and terpene cyclase activity, converting isopentenyl diphosphate and dimethylallyl diphosphate into geranylgeranyl diphosphate (GGDP) and successively converting GGDP into fusicocca-2,10(14)-diene, a precursor for fusicoccin H. The second step is the oxidation at the C-8 position by the cytochrome P450 monooxygenase PaP450-2 to yield fusicocca-2,10(14)-diene-8-beta-ol. The cytochrome P450 monooxygenase PaP450-1 then catalyzes the hydroxylation at the C-16 position to produce fusicocca-2,10(14)-diene-8-beta,16-diol. The dioxygenase fc-dox then catalyzes the 16-oxydation of fusicocca-2,10(14)-diene-8-beta,16-diol to yield an aldehyde (8-beta-hydroxyfusicocca-1,10(14)-dien-16-al). The short-chain dehydrogenase/reductase fc-sdr catalyzes the reduction of the aldehyde to yield fusicocca-1,10(14)-diene-8-beta,16-diol. The next step is the hydroxylation at C-9 performed by the cytochrome P450 monooxygenase PaP450-3 that leads to fusicoccin H aglycon which is glycosylated to fusicoccin H by the O-glycosyltransferase PaGT. Hydroxylation at C-12 by the cytochrome P450 monooxygenase PaP450-4 leads then to the production of fusicoccin Q and is followed by methylation by the O-methyltransferase PaMT to yield fusicoccin P. Fusicoccin P is further converted to fusicoccin J via prenylation by the O-glucose prenyltransferase PaPT. Cytochrome P450 monooxygenase PaP450-5 then performs hydroxylation at C-19 to yield dideacetyl-fusicoccin A which is acetylated to 3'-O-deacetyl-fusicoccin A by the O-acetyltransferase PaAT-2. Finally, a another acetylation by the O-acetyltransferase PaAT-1 yields fusicoccin A. This is O-glucose prenyltransferase PaPT from Phomopsis amygdali (Fusicoccum amygdali).